We begin with the raw amino-acid sequence, 140 residues long: Aspartate 1-decarboxylase (140 aa).

S25 functions as the Schiff-base intermediate with substrate; via pyruvic acid in the catalytic mechanism. At S25 the chain carries Pyruvic acid (Ser). Residue T57 coordinates substrate. Y58 serves as the catalytic Proton donor. 73–75 is a binding site for substrate; the sequence is GAA.

Belongs to the PanD family. As to quaternary structure, heterooctamer of four alpha and four beta subunits. It depends on pyruvate as a cofactor. Post-translationally, is synthesized initially as an inactive proenzyme, which is activated by self-cleavage at a specific serine bond to produce a beta-subunit with a hydroxyl group at its C-terminus and an alpha-subunit with a pyruvoyl group at its N-terminus.

It is found in the cytoplasm. It catalyses the reaction L-aspartate + H(+) = beta-alanine + CO2. It participates in cofactor biosynthesis; (R)-pantothenate biosynthesis; beta-alanine from L-aspartate: step 1/1. Catalyzes the pyruvoyl-dependent decarboxylation of aspartate to produce beta-alanine. This Persephonella marina (strain DSM 14350 / EX-H1) protein is Aspartate 1-decarboxylase.